The primary structure comprises 206 residues: Lipid A acyltransferase PagP (206 aa).

Positions 1 to 22 (MKQMVCWLTAGLLTLGGLPARA) are cleaved as a signal peptide. A compositionally biased stretch (low complexity) spans 26–46 (VPAVPETPAAPAAPAVQETPA). Residues 26–50 (VPAVPETPAAPAAPAVQETPASSAA) are disordered. Active-site residues include His-80, Asp-123, and Ser-124.

This sequence belongs to the lipid A palmitoyltransferase family. As to quaternary structure, homodimer.

Its subcellular location is the cell outer membrane. It carries out the reaction a lipid A + a 1,2-diacyl-sn-glycero-3-phosphocholine = a hepta-acyl lipid A + a 2-acyl-sn-glycero-3-phosphocholine. It catalyses the reaction a lipid IVA + a 1,2-diacyl-sn-glycero-3-phosphocholine = a lipid IVB + a 2-acyl-sn-glycero-3-phosphocholine. The catalysed reaction is a lipid IIA + a 1,2-diacyl-sn-glycero-3-phosphocholine = a lipid IIB + a 2-acyl-sn-glycero-3-phosphocholine. Functionally, transfers a fatty acid residue from the sn-1 position of a phospholipid to the N-linked hydroxyfatty acid chain on the proximal unit of lipid A or its precursors. This chain is Lipid A acyltransferase PagP, found in Laribacter hongkongensis (strain HLHK9).